Consider the following 565-residue polypeptide: Adenine deaminase (565 aa).

Belongs to the metallo-dependent hydrolases superfamily. Adenine deaminase family. Mn(2+) serves as cofactor.

It carries out the reaction adenine + H2O + H(+) = hypoxanthine + NH4(+). The sequence is that of Adenine deaminase from Cereibacter sphaeroides (strain ATCC 17023 / DSM 158 / JCM 6121 / CCUG 31486 / LMG 2827 / NBRC 12203 / NCIMB 8253 / ATH 2.4.1.) (Rhodobacter sphaeroides).